A 514-amino-acid polypeptide reads, in one-letter code: Nucleus accumbens-associated protein 1 (514 aa).

The BTB domain maps to 30–94; sequence CDVSVVVKGH…CYTGRLSMNM (65 aa). Residue Lys167 forms a Glycyl lysine isopeptide (Lys-Gly) (interchain with G-Cter in SUMO1); alternate linkage. Lys167 is covalently cross-linked (Glycyl lysine isopeptide (Lys-Gly) (interchain with G-Cter in SUMO2); alternate). Lys182 participates in a covalent cross-link: Glycyl lysine isopeptide (Lys-Gly) (interchain with G-Cter in SUMO2). Disordered regions lie at residues 183–218 and 241–279; these read RLWD…NRMP and GPSM…EEGT. Position 187 is a phosphoserine (Ser187). Polar residues predominate over residues 242 to 251; sequence PSMSERTSPG. Residue Ser245 is modified to Phosphoserine; by PKC. The span at 252–264 shows a compositional bias: low complexity; the sequence is TSSAYTSDSPSSY. The segment covering 267-279 has biased composition (acidic residues); sequence EEDEEEDAGEEGT. Residues Lys304, Lys438, Lys466, and Lys485 each participate in a glycyl lysine isopeptide (Lys-Gly) (interchain with G-Cter in SUMO2) cross-link. The region spanning 360 to 457 is the BEN domain; that stretch reads GTNVYITRAQ…DMCTNARRVV (98 aa). Ser492 and Ser496 each carry phosphoserine.

Homooligomer; mediated by the BTB domain. Both isoforms interact with HDAC3 and HDAC4. Interacts (via BTB domain) with CUL3, PSMD7 and RCOR1. Phosphorylated by protein kinase C (PKC). Highly expressed in the hippocampus, brain cortex, cerebellum and brainstem. Expressed in the nucleus accumbens, olfactory tubercle, the striatum, frontal and parietal cortex and ventral pallidum. Weakly expressed in the heart, liver, kidney, spleen, testis, and skeletal muscle. Isoform 2 is expressed in the brain and liver, less abundantly expressed in the brain than isoform 1.

The protein resides in the nucleus. The protein localises to the cytoplasm. Its function is as follows. Functions as a transcriptional repressor. Isoform 1 is a stronger transcriptional repressor than isoform 2. Seems to function as a transcriptional corepressor in neuronal cells through recruitment of HDAC3 and HDAC4. Contributes to tumor progression, and tumor cell proliferation and survival. This may be mediated at least in part through repressing transcriptional activity of GADD45GIP1. Required for recruiting the proteasome from the nucleus to the cytoplasm and dendritic spines. This Rattus norvegicus (Rat) protein is Nucleus accumbens-associated protein 1 (Nacc1).